Reading from the N-terminus, the 307-residue chain is UDP-3-O-acyl-N-acetylglucosamine deacetylase (307 aa).

Residues His78, His241, and Asp245 each contribute to the Zn(2+) site. His268 (proton donor) is an active-site residue.

It belongs to the LpxC family. Zn(2+) serves as cofactor.

The catalysed reaction is a UDP-3-O-[(3R)-3-hydroxyacyl]-N-acetyl-alpha-D-glucosamine + H2O = a UDP-3-O-[(3R)-3-hydroxyacyl]-alpha-D-glucosamine + acetate. The protein operates within glycolipid biosynthesis; lipid IV(A) biosynthesis; lipid IV(A) from (3R)-3-hydroxytetradecanoyl-[acyl-carrier-protein] and UDP-N-acetyl-alpha-D-glucosamine: step 2/6. Catalyzes the hydrolysis of UDP-3-O-myristoyl-N-acetylglucosamine to form UDP-3-O-myristoylglucosamine and acetate, the committed step in lipid A biosynthesis. The sequence is that of UDP-3-O-acyl-N-acetylglucosamine deacetylase from Polaromonas sp. (strain JS666 / ATCC BAA-500).